Here is a 396-residue protein sequence, read N- to C-terminus: Elongation factor Tu (396 aa).

The region spanning 10–205 (KPHVNVGTIG…AVDEYIPTPE (196 aa)) is the tr-type G domain. The segment at 19–26 (GHVDHGKT) is G1. 19 to 26 (GHVDHGKT) is a GTP binding site. A Mg(2+)-binding site is contributed by T26. The segment at 61-65 (GITIA) is G2. The G3 stretch occupies residues 82–85 (DCPG). GTP-binding positions include 82–86 (DCPGH) and 137–140 (NKTD). Residues 137–140 (NKTD) form a G4 region. The segment at 175-177 (SAL) is G5.

The protein belongs to the TRAFAC class translation factor GTPase superfamily. Classic translation factor GTPase family. EF-Tu/EF-1A subfamily. As to quaternary structure, monomer.

It localises to the cytoplasm. It carries out the reaction GTP + H2O = GDP + phosphate + H(+). In terms of biological role, GTP hydrolase that promotes the GTP-dependent binding of aminoacyl-tRNA to the A-site of ribosomes during protein biosynthesis. This Salinibacter ruber (strain DSM 13855 / M31) protein is Elongation factor Tu.